We begin with the raw amino-acid sequence, 107 residues long: Inner membrane protein YiaW (107 aa).

At 1–6 (MFLDYF) the chain is on the cytoplasmic side. A helical transmembrane segment spans residues 7-29 (ALGVLIFVFLVIFYGIIILHDIP). The Periplasmic segment spans residues 30–43 (YLIAKKRNHPHADA). Residues 44-66 (IHVAGWVSLFTLHVIWPFLWIWA) traverse the membrane as a helical segment. The Cytoplasmic portion of the chain corresponds to 67-107 (TLYRPERGWGMQSHDSSVMQLQQRIAGLEKQLADIKSSSAE).

This sequence to E.coli YibI.

It is found in the cell inner membrane. This chain is Inner membrane protein YiaW (yiaW), found in Escherichia coli O157:H7.